A 77-amino-acid polypeptide reads, in one-letter code: Cold shock protein YdfK (77 aa).

To E.coli YnaE.

This chain is Cold shock protein YdfK (ydfK), found in Escherichia coli (strain K12).